Here is a 245-residue protein sequence, read N- to C-terminus: Ribonuclease PH (245 aa).

Phosphate is bound by residues arginine 93 and 131 to 133 (GTR).

The protein belongs to the RNase PH family. As to quaternary structure, homohexameric ring arranged as a trimer of dimers.

The catalysed reaction is tRNA(n+1) + phosphate = tRNA(n) + a ribonucleoside 5'-diphosphate. Functionally, phosphorolytic 3'-5' exoribonuclease that plays an important role in tRNA 3'-end maturation. Removes nucleotide residues following the 3'-CCA terminus of tRNAs; can also add nucleotides to the ends of RNA molecules by using nucleoside diphosphates as substrates, but this may not be physiologically important. Probably plays a role in initiation of 16S rRNA degradation (leading to ribosome degradation) during starvation. This chain is Ribonuclease PH, found in Corynebacterium efficiens (strain DSM 44549 / YS-314 / AJ 12310 / JCM 11189 / NBRC 100395).